The sequence spans 911 residues: Protein translocase subunit SecA (911 aa).

ATP is bound by residues Gln-87, 105 to 109 (GEGKT), and Asp-513. Residues 853–911 (IQLQHEQVSGLEPEAGEAPSAGEPRSEQPYVRAGRKVGRNDPCPCGSGKKFKACHGKLG) are disordered. Residues 862-875 (GLEPEAGEAPSAGE) are compositionally biased toward low complexity. Positions 895, 897, 906, and 907 each coordinate Zn(2+). A compositionally biased stretch (basic residues) spans 901 to 911 (KKFKACHGKLG).

It belongs to the SecA family. Monomer and homodimer. Part of the essential Sec protein translocation apparatus which comprises SecA, SecYEG and auxiliary proteins SecDF-YajC and YidC. Requires Zn(2+) as cofactor.

The protein resides in the cell inner membrane. It is found in the cytoplasm. It catalyses the reaction ATP + H2O + cellular proteinSide 1 = ADP + phosphate + cellular proteinSide 2.. Functionally, part of the Sec protein translocase complex. Interacts with the SecYEG preprotein conducting channel. Has a central role in coupling the hydrolysis of ATP to the transfer of proteins into and across the cell membrane, serving both as a receptor for the preprotein-SecB complex and as an ATP-driven molecular motor driving the stepwise translocation of polypeptide chains across the membrane. The polypeptide is Protein translocase subunit SecA (Teredinibacter turnerae (strain ATCC 39867 / T7901)).